The following is a 72-amino-acid chain: Gas vesicle protein A (72 aa).

This sequence belongs to the gas vesicle GvpA family. In terms of assembly, the gas vesicle shell is 2 nm thick and consists of a single layer of this protein. It forms helical ribs nearly perpendicular to the long axis of the vesicle.

It localises to the gas vesicle shell. Its function is as follows. Gas vesicles are hollow, gas filled proteinaceous nanostructures found in some microorganisms. During planktonic growth they allow positioning of the organism at a favorable depth for light or nutrient acquisition. GvpA forms the protein shell. The protein is Gas vesicle protein A of Geotalea uraniireducens (strain Rf4) (Geobacter uraniireducens).